The sequence spans 124 residues: uncharacterized protein (124 aa).

The signal sequence occupies residues 1 to 22 (MGTSSVLLMIASSLILLEVVMT).

This is an uncharacterized protein from Caenorhabditis elegans.